Consider the following 579-residue polypeptide: Arginine--tRNA ligase (579 aa).

Residues 136–146 carry the 'HIGH' region motif; it reads ANPTGPLHIGH.

It belongs to the class-I aminoacyl-tRNA synthetase family. As to quaternary structure, monomer.

It is found in the cytoplasm. It carries out the reaction tRNA(Arg) + L-arginine + ATP = L-arginyl-tRNA(Arg) + AMP + diphosphate. This Anaplasma marginale (strain St. Maries) protein is Arginine--tRNA ligase.